Here is a 396-residue protein sequence, read N- to C-terminus: 1-deoxy-D-xylulose 5-phosphate reductoisomerase (396 aa).

6 residues coordinate NADPH: T17, G18, S19, I20, N47, and N130. 1-deoxy-D-xylulose 5-phosphate is bound at residue K131. E132 contributes to the NADPH binding site. D156 contacts Mn(2+). 1-deoxy-D-xylulose 5-phosphate contacts are provided by S157, E158, S182, and H205. E158 is a binding site for Mn(2+). Residue G211 coordinates NADPH. 1-deoxy-D-xylulose 5-phosphate-binding residues include S218, N223, K224, and E227. Residue E227 participates in Mn(2+) binding.

This sequence belongs to the DXR family. The cofactor is Mg(2+). It depends on Mn(2+) as a cofactor.

It carries out the reaction 2-C-methyl-D-erythritol 4-phosphate + NADP(+) = 1-deoxy-D-xylulose 5-phosphate + NADPH + H(+). Its pathway is isoprenoid biosynthesis; isopentenyl diphosphate biosynthesis via DXP pathway; isopentenyl diphosphate from 1-deoxy-D-xylulose 5-phosphate: step 1/6. In terms of biological role, catalyzes the NADPH-dependent rearrangement and reduction of 1-deoxy-D-xylulose-5-phosphate (DXP) to 2-C-methyl-D-erythritol 4-phosphate (MEP). The chain is 1-deoxy-D-xylulose 5-phosphate reductoisomerase from Rhizobium johnstonii (strain DSM 114642 / LMG 32736 / 3841) (Rhizobium leguminosarum bv. viciae).